Reading from the N-terminus, the 392-residue chain is Probable myosin light chain kinase DDB_G0271550 (392 aa).

The Protein kinase domain maps to 20-278; sequence YEFGPEIGRG…ASQCIKHPWL (259 aa). Residues 26–34 and K49 contribute to the ATP site; that span reads IGRGAFSIV. D142 (proton acceptor) is an active-site residue. Positions 317 to 326 are enriched in polar residues; the sequence is SQSTPNLHSA. The interval 317–392 is disordered; it reads SQSTPNLHSA…NNNNNNNNNI (76 aa). The segment covering 327 to 392 has biased composition (low complexity); that stretch reads NSNTNTNSLS…NNNNNNNNNI (66 aa).

The protein belongs to the protein kinase superfamily. CAMK Ser/Thr protein kinase family. CaMK subfamily.

The catalysed reaction is L-seryl-[myosin light chain] + ATP = O-phospho-L-seryl-[myosin light chain] + ADP + H(+). It catalyses the reaction L-threonyl-[myosin light chain] + ATP = O-phospho-L-threonyl-[myosin light chain] + ADP + H(+). May phosphorylate a specific serine in the N-terminus of a myosin light chain. The sequence is that of Probable myosin light chain kinase DDB_G0271550 from Dictyostelium discoideum (Social amoeba).